We begin with the raw amino-acid sequence, 242 residues long: MKMCFPCLQCFCSTSDDKVVVSKNDKGGESGKKFRLFSYHELKVACDGFSSKNKVGEGGCGAVYKGRLTDGTMVAIKVLSVELESMRGEREFISEIAALSDAQHENLVNLHGCCVEEATRCLVYDYMENNSLAYQFLGREQNRNSFDWTKRKNVLLGVAKALAYLHEEINPHIVHRDIKASNVLLDHNFNPKVADFGLARLFQEGTSHISTRVAGTLGYLSPEYAVSERLTRKSDVYSFGVL.

The Protein kinase domain maps to 49 to 242; sequence FSSKNKVGEG…KSDVYSFGVL (194 aa). Residues 55–63 and lysine 77 contribute to the ATP site; that span reads VGEGGCGAV. The Proton acceptor role is filled by aspartate 177.

This sequence belongs to the protein kinase superfamily. Ser/Thr protein kinase family.

The enzyme catalyses L-seryl-[protein] + ATP = O-phospho-L-seryl-[protein] + ADP + H(+). The catalysed reaction is L-threonyl-[protein] + ATP = O-phospho-L-threonyl-[protein] + ADP + H(+). This chain is Putative serine/threonine-protein kinase, found in Helianthus annuus (Common sunflower).